Consider the following 186-residue polypeptide: Protein C (186 aa).

The span at 1–12 shows a compositional bias: polar residues; sequence MSKTDWNASGPS. Residues 1–43 form a disordered region; the sequence is MSKTDWNASGPSRPSPSAHWPSGKLWQHGQKYQTTQDRSRPPA.

The protein belongs to the morbillivirus protein C family. As to quaternary structure, interacts with the phosphoprotein (via C-terminus); this interaction allows C to associate with the ribonucleocapsid.

Its subcellular location is the host nucleus. It localises to the host cytoplasmic vesicle. Its function is as follows. Ribonucleocapsid-associated protein that interacts with the phosphoprotein (P), thereby increasing replication accuracy and processivity of the polymerase complex. The protein is Protein C (P/V/C) of Homo sapiens (Human).